We begin with the raw amino-acid sequence, 148 residues long: 6,7-dimethyl-8-ribityllumazine synthase (148 aa).

5-amino-6-(D-ribitylamino)uracil is bound by residues phenylalanine 13, 44-46 (ALE), and 73-75 (MVI). (2S)-2-hydroxy-3-oxobutyl phosphate is bound at residue 78–79 (ET). Catalysis depends on histidine 81, which acts as the Proton donor. Asparagine 106 is a 5-amino-6-(D-ribitylamino)uracil binding site. Arginine 120 serves as a coordination point for (2S)-2-hydroxy-3-oxobutyl phosphate.

Belongs to the DMRL synthase family.

The enzyme catalyses (2S)-2-hydroxy-3-oxobutyl phosphate + 5-amino-6-(D-ribitylamino)uracil = 6,7-dimethyl-8-(1-D-ribityl)lumazine + phosphate + 2 H2O + H(+). Its pathway is cofactor biosynthesis; riboflavin biosynthesis; riboflavin from 2-hydroxy-3-oxobutyl phosphate and 5-amino-6-(D-ribitylamino)uracil: step 1/2. In terms of biological role, catalyzes the formation of 6,7-dimethyl-8-ribityllumazine by condensation of 5-amino-6-(D-ribitylamino)uracil with 3,4-dihydroxy-2-butanone 4-phosphate. This is the penultimate step in the biosynthesis of riboflavin. The protein is 6,7-dimethyl-8-ribityllumazine synthase of Agrobacterium fabrum (strain C58 / ATCC 33970) (Agrobacterium tumefaciens (strain C58)).